The chain runs to 422 residues: Serine protease HTRA2, mitochondrial (422 aa).

The transit peptide at methionine 1–isoleucine 17 directs the protein to the mitochondrion. Residues alanine 18–glycine 74 constitute a propeptide that is removed on maturation. A disordered region spans residues glutamine 33–glutamate 55. A compositionally biased stretch (low complexity) spans asparagine 42–asparagine 53. Residues leucine 64–isoleucine 82 form a helical membrane-spanning segment. Short sequence motifs (IAP-binding) lie at residues alanine 75–serine 78 and serine 94–threonine 97. The tract at residues serine 139–leucine 302 is serine protease. Residues histidine 157, aspartate 189, and serine 266 each act as charge relay system in the active site. Residues methionine 325–valine 410 enclose the PDZ domain.

Belongs to the peptidase S1C family. In terms of assembly, interacts with th/DIAP1 (via BIR 2 domain).

The protein localises to the mitochondrion intermembrane space. It localises to the mitochondrion membrane. It carries out the reaction Cleavage of non-polar aliphatic amino-acids at the P1 position, with a preference for Val, Ile and Met. At the P2 and P3 positions, Arg is selected most strongly with a secondary preference for other hydrophilic residues.. Functionally, serine protease that shows proteolytic activity against a non-specific substrate beta-casein. Promotes or induces cell death either by direct binding to and inhibition of BIRC proteins (also called inhibitor of apoptosis proteins, IAPs), leading to an increase in caspase activity, or by a BIRC inhibition-independent, caspase-independent and serine protease activity-dependent mechanism. Can antagonize antiapoptotic activity of th/Diap1 by directly inducing the degradation of th/Diap1. This chain is Serine protease HTRA2, mitochondrial, found in Drosophila simulans (Fruit fly).